Reading from the N-terminus, the 313-residue chain is Protein TIFY 4A (313 aa).

The interval serine 118–glutamate 149 is disordered. Residues threonine 150–asparagine 185 form the Tify domain. Disordered stretches follow at residues lysine 220–lysine 256 and glutamine 281–isoleucine 313. The Jas motif lies at glutamine 232–alanine 254. The short motif at asparagine 234–arginine 241 is the Nuclear localization signal element. The segment covering arginine 243–lysine 256 has biased composition (basic residues).

Belongs to the TIFY/JAZ family. As to quaternary structure, interacts with AFPH2/NINJA.

It localises to the nucleus. Regulates the arrest of dispersed meristematic cells during lamina development. This chain is Protein TIFY 4A (TIFY4A), found in Arabidopsis thaliana (Mouse-ear cress).